Consider the following 406-residue polypeptide: Luteothin monooxygenase (406 aa).

The heme b site is built by His-98, Arg-102, Arg-296, Gly-350, His-353, and Cys-355.

It belongs to the cytochrome P450 family. In terms of assembly, monomer. Requires heme b as cofactor.

It carries out the reaction luteothin + 4 reduced [2Fe-2S]-[ferredoxin] + 2 O2 + 4 H(+) = aureothin + 4 oxidized [2Fe-2S]-[ferredoxin] + 3 H2O. It functions in the pathway antibiotic biosynthesis. It participates in polyketide biosynthesis. Bifunctional cytochrome P450 protein involved in the biosynthesis of the antibiotic aureothin, a nitroaryl polyketide metabolite with antifungal, cytotoxic and insecticidal activities. Catalyzes the hydroxylation of luteothin (also called deoxyaureothin), leading to the formation of the intermediate (7R)-7-hydroxydeoxyaureothin, followed by the formation of the aureothin tetrahydrofuran ring, the final step in the biosynthesis of aureothin. The chain is Luteothin monooxygenase from Streptomyces thioluteus.